A 277-amino-acid polypeptide reads, in one-letter code: Putative phosphoenolpyruvate synthase regulatory protein (277 aa).

157-164 (GVSRCGKT) is a binding site for ADP.

It belongs to the pyruvate, phosphate/water dikinase regulatory protein family. PSRP subfamily.

It carries out the reaction [pyruvate, water dikinase] + ADP = [pyruvate, water dikinase]-phosphate + AMP + H(+). The enzyme catalyses [pyruvate, water dikinase]-phosphate + phosphate + H(+) = [pyruvate, water dikinase] + diphosphate. In terms of biological role, bifunctional serine/threonine kinase and phosphorylase involved in the regulation of the phosphoenolpyruvate synthase (PEPS) by catalyzing its phosphorylation/dephosphorylation. This chain is Putative phosphoenolpyruvate synthase regulatory protein, found in Erwinia tasmaniensis (strain DSM 17950 / CFBP 7177 / CIP 109463 / NCPPB 4357 / Et1/99).